The sequence spans 456 residues: Serine--tRNA ligase (456 aa).

Disordered regions lie at residues 107–130 (PHSS…GTPP) and 229–253 (FLEN…QDDD). Residues 114–125 (GRSESDNREVRR) show a composition bias toward basic and acidic residues. Residues 239–248 (LPSNSNSPQG) are compositionally biased toward polar residues. 260-262 (TSE) provides a ligand contact to L-serine. 291 to 293 (RSE) lines the ATP pocket. Residue E314 coordinates L-serine. 378-381 (EISS) lines the ATP pocket. Residue S413 coordinates L-serine.

Belongs to the class-II aminoacyl-tRNA synthetase family. Type-1 seryl-tRNA synthetase subfamily. As to quaternary structure, homodimer. The tRNA molecule binds across the dimer.

It localises to the cytoplasm. The enzyme catalyses tRNA(Ser) + L-serine + ATP = L-seryl-tRNA(Ser) + AMP + diphosphate + H(+). It catalyses the reaction tRNA(Sec) + L-serine + ATP = L-seryl-tRNA(Sec) + AMP + diphosphate + H(+). The protein operates within aminoacyl-tRNA biosynthesis; selenocysteinyl-tRNA(Sec) biosynthesis; L-seryl-tRNA(Sec) from L-serine and tRNA(Sec): step 1/1. Its function is as follows. Catalyzes the attachment of serine to tRNA(Ser). Is also able to aminoacylate tRNA(Sec) with serine, to form the misacylated tRNA L-seryl-tRNA(Sec), which will be further converted into selenocysteinyl-tRNA(Sec). The sequence is that of Serine--tRNA ligase from Nitrosospira multiformis (strain ATCC 25196 / NCIMB 11849 / C 71).